A 181-amino-acid polypeptide reads, in one-letter code: Transcription termination/antitermination protein NusG (181 aa).

One can recognise a KOW domain in the interval 130–161 (PGEMVRVNDGPFADFNGVVEEVDYEKSRLKVS).

Belongs to the NusG family. In terms of assembly, monomer. Interacts with the transcription termination factor Rho and with RNA polymerase.

Its function is as follows. Participates in transcription elongation, termination and antitermination. In the absence of Rho, increases the rate of transcription elongation by the RNA polymerase (RNAP), probably by partially suppressing pausing. In the presence of Rho, modulates most Rho-dependent termination events by interacting with the RNAP to render the complex more susceptible to the termination activity of Rho. May be required to overcome a kinetic limitation of Rho to function at certain terminators. Also involved in ribosomal RNA transcriptional antitermination. This is Transcription termination/antitermination protein NusG from Shigella flexneri.